Here is a 728-residue protein sequence, read N- to C-terminus: Glutamate--cysteine ligase (728 aa).

Residues 517-552 form a disordered region; the sequence is PVRTTRRGGSASRSASGTSTPNSGSSRPATPPLGPV. Positions 523–536 are enriched in low complexity; it reads RGGSASRSASGTST.

Belongs to the glutamate--cysteine ligase type 3 family.

The enzyme catalyses L-cysteine + L-glutamate + ATP = gamma-L-glutamyl-L-cysteine + ADP + phosphate + H(+). It functions in the pathway sulfur metabolism; glutathione biosynthesis; glutathione from L-cysteine and L-glutamate: step 1/2. This is Glutamate--cysteine ligase (gcs-1) from Neurospora crassa (strain ATCC 24698 / 74-OR23-1A / CBS 708.71 / DSM 1257 / FGSC 987).